The primary structure comprises 247 residues: Malonyl-[acyl-carrier protein] O-methyltransferase (247 aa).

Belongs to the methyltransferase superfamily.

It catalyses the reaction malonyl-[ACP] + S-adenosyl-L-methionine = malonyl-[ACP] methyl ester + S-adenosyl-L-homocysteine. It participates in cofactor biosynthesis; biotin biosynthesis. Its function is as follows. Converts the free carboxyl group of a malonyl-thioester to its methyl ester by transfer of a methyl group from S-adenosyl-L-methionine (SAM). It allows to synthesize pimeloyl-ACP via the fatty acid synthetic pathway. The polypeptide is Malonyl-[acyl-carrier protein] O-methyltransferase (Buchnera aphidicola subsp. Baizongia pistaciae (strain Bp)).